The following is a 485-amino-acid chain: Homeobox protein unplugged (485 aa).

3 disordered regions span residues 1 to 65 (MERP…QEQE), 114 to 157 (PAGH…DTRF), and 212 to 325 (GMAQ…RRTA). Over residues 54–64 (RDQEQEAEQEQ) the composition is skewed to acidic residues. Over residues 114 to 128 (PAGHPAAQQPQAQAQ) the composition is skewed to low complexity. Polar residues-rich tracts occupy residues 223 to 234 (QAHSSPAKSGSH) and 254 to 267 (DSCS…SPRN). Residues 284 to 293 (DSEDCSDDEG) show a composition bias toward acidic residues. The span at 308 to 317 (SQGNGSSSNS) shows a compositional bias: low complexity. Positions 319 to 378 (SRRRRTAFTSEQLLELEREFHAKKYLSLTERSQIATSLKLSEVQVKIWFQNRRAKWKRVK) form a DNA-binding region, homeobox.

As to expression, expressed in the neuroectodermal and mesectodermal cells at the ventral midline of stage 8 embryos, Subsequently, expression domains in the CNS widen and have their most anterior border in the posterior deutocerebrum. Oc/otd and unpg are mutual repressors at the interface of their brain-specific expression domains. Expression fades during germ band retraction and is then restricted to subset of cells by stage 14. Expressed in the founder cells of the cerebral branch within the first tracheal metamere. Outside the CNS, expression is seen in two clusters of ectodermal cells located laterally within the labial and first thoracic segments of stage 9 embryos. By stage 13, the expression is detected in a few cells close to the dorsal midline of the embryos.

The protein localises to the nucleus. In terms of biological role, plays a regulatory role in neural branching of the tracheae: segment-specific aspects of these neural branching patterns appear to be generated by homeotic regulation of expression. May have a role with oc/otd in the postembryonic development of the brain. The sequence is that of Homeobox protein unplugged from Drosophila melanogaster (Fruit fly).